Here is a 257-residue protein sequence, read N- to C-terminus: MSTLITLKNVAVNFGDRRVLNNISLHLQRGNILTLLGPNGAGKSTLVRVVLGLIEPSSGTIEQTDGLKIGYVPQKLHLDPTLPLTVKRFMMLKPGVKSGDILPALERVNAAHLLQQPMQKLSGGESQRVLLARALLNQPQLLVLDEPTQGVDVNGQLALYDLINQIRTELHCAVLMVSHDLHLVMAKTDEVLCLNQHICCSGTPEVVSTHPEFIAMFGHHGAEQLAIYRHQHDHHQHNHHHDLKGKIILENNRECHS.

The 216-residue stretch at 5 to 220 folds into the ABC transporter domain; the sequence is ITLKNVAVNF…PEFIAMFGHH (216 aa). An ATP-binding site is contributed by 37–44; sequence GPNGAGKS.

It belongs to the ABC transporter superfamily. Zinc importer (TC 3.A.1.15.5) family. As to quaternary structure, the complex is composed of two ATP-binding proteins (ZnuC), two transmembrane proteins (ZnuB) and a solute-binding protein (ZnuA).

The protein resides in the cell inner membrane. It catalyses the reaction Zn(2+)(out) + ATP(in) + H2O(in) = Zn(2+)(in) + ADP(in) + phosphate(in) + H(+)(in). Its function is as follows. Part of the ABC transporter complex ZnuABC involved in zinc import. Responsible for energy coupling to the transport system. This chain is Zinc import ATP-binding protein ZnuC, found in Photorhabdus laumondii subsp. laumondii (strain DSM 15139 / CIP 105565 / TT01) (Photorhabdus luminescens subsp. laumondii).